The primary structure comprises 170 residues: Peptide deformylase (170 aa).

Fe cation is bound by residues Cys91 and His133. Glu134 is a catalytic residue. His137 lines the Fe cation pocket.

Belongs to the polypeptide deformylase family. Requires Fe(2+) as cofactor.

The enzyme catalyses N-terminal N-formyl-L-methionyl-[peptide] + H2O = N-terminal L-methionyl-[peptide] + formate. Its function is as follows. Removes the formyl group from the N-terminal Met of newly synthesized proteins. Requires at least a dipeptide for an efficient rate of reaction. N-terminal L-methionine is a prerequisite for activity but the enzyme has broad specificity at other positions. This chain is Peptide deformylase, found in Histophilus somni (strain 2336) (Haemophilus somnus).